The following is a 23-amino-acid chain: Cytochrome c oxidase subunit 7A1, mitochondrial (23 aa).

It belongs to the cytochrome c oxidase VIIa family. In terms of assembly, component of the complex IV (CIV, cytochrome c oxidase), a multisubunit enzyme composed of 14 subunits. The complex is composed of a catalytic core of 3 subunits MT-CO1, MT-CO2 and MT-CO3, encoded in the mitochondrial DNA, and 11 supernumerary subunits COX4I1 (or COX4I2), COX5A, COX5B, COX6A2 (or COX6A1), COX6B1 (or COX6B2), COX6C, COX7A1 (or COX7A2), COX7B, COX7C, COX8B and NDUFA4, which are encoded in the nuclear genome. The complex exists as a monomer or a dimer and forms supercomplexes (SCs) in the inner mitochondrial membrane with NADH-ubiquinone oxidoreductase (complex I, CI) and ubiquinol-cytochrome c oxidoreductase (cytochrome b-c1 complex, complex III, CIII), resulting in different assemblies (supercomplex SCI(1)III(2)IV(1) and megacomplex MCI(2)III(2)IV(2)).

The protein resides in the mitochondrion inner membrane. It participates in energy metabolism; oxidative phosphorylation. Component of the mitochondrial respiratory complex IV (CIV, also named cytochrome c oxidase complex), the last enzyme in the mitochondrial electron transport chain which drives oxidative phosphorylation. The CIV complex is the component of the respiratory chain that catalyzes the reduction of oxygen to water. Acts as an assembly factor that specifically drives the homodimerization of CIV complexes, mediating the formation of mitochondrial respiratory supercomplexes (respirasomes) containing two CIV: supercomplxes with two molecules of CIV show improved activity. Despite being highly expressed in brown adipose tissue, not required for thermogenesis. This chain is Cytochrome c oxidase subunit 7A1, mitochondrial (COX7A1), found in Canis lupus familiaris (Dog).